The sequence spans 425 residues: Glucose-1-phosphate adenylyltransferase (425 aa).

Alpha-D-glucose 1-phosphate is bound by residues tyrosine 114, glycine 179, 194 to 195 (EK), and serine 212.

This sequence belongs to the bacterial/plant glucose-1-phosphate adenylyltransferase family. Homotetramer.

It catalyses the reaction alpha-D-glucose 1-phosphate + ATP + H(+) = ADP-alpha-D-glucose + diphosphate. The protein operates within glycan biosynthesis; glycogen biosynthesis. Its function is as follows. Involved in the biosynthesis of ADP-glucose, a building block required for the elongation reactions to produce glycogen. Catalyzes the reaction between ATP and alpha-D-glucose 1-phosphate (G1P) to produce pyrophosphate and ADP-Glc. This Pectobacterium carotovorum subsp. carotovorum (strain PC1) protein is Glucose-1-phosphate adenylyltransferase.